A 56-amino-acid polypeptide reads, in one-letter code: uncharacterized protein (56 aa).

A helical transmembrane segment spans residues 30–52 (IKIGIICVIITWAIFSINHHHTI).

It localises to the membrane. This is an uncharacterized protein from Dictyostelium discoideum (Social amoeba).